Reading from the N-terminus, the 539-residue chain is Alpha-aminoadipic semialdehyde dehydrogenase (539 aa).

The N-terminal 26 residues, 1-26 (MWRVPGLLCVRVARKSKFSGSWNRPA), are a transit peptide targeting the mitochondrion. An N6-acetyllysine; alternate modification is found at K94. Position 94 is an N6-succinyllysine; alternate (K94). Residues 192-194 (TAF), K218, 258-259 (GT), 274-275 (GS), 274-279 (GSTQVG), and 296-297 (EL) contribute to the NAD(+) site. Residue E296 is the Proton acceptor of the active site. C330 acts as the Nucleophile in catalysis. Residue T331 participates in (S)-2-amino-6-oxohexanoate binding. NAD(+) is bound at residue E427. N6-acetyllysine is present on K462. The (S)-2-amino-6-oxohexanoate site is built by G489 and A490. K500 is modified (N6-acetyllysine). K537 carries the post-translational modification N6-succinyllysine.

It belongs to the aldehyde dehydrogenase family. As to quaternary structure, homotetramer.

Its subcellular location is the cytoplasm. It localises to the cytosol. The protein resides in the nucleus. The protein localises to the mitochondrion. It carries out the reaction nonanal + NAD(+) + H2O = nonanoate + NADH + 2 H(+). The enzyme catalyses (S)-2-amino-6-oxohexanoate + NAD(+) + H2O = L-2-aminoadipate + NADH + 2 H(+). The catalysed reaction is betaine aldehyde + NAD(+) + H2O = glycine betaine + NADH + 2 H(+). It catalyses the reaction an aldehyde + NAD(+) + H2O = a carboxylate + NADH + 2 H(+). It carries out the reaction hexanal + NAD(+) + H2O = hexanoate + NADH + 2 H(+). The enzyme catalyses octanal + NAD(+) + H2O = octanoate + NADH + 2 H(+). The catalysed reaction is (E)-non-2-enal + NAD(+) + H2O = (E)-non-2-enoate + NADH + 2 H(+). It catalyses the reaction (E)-4-hydroxynon-2-enal + NAD(+) + H2O = (E)-4-hydroxynon-2-enoate + NADH + 2 H(+). It functions in the pathway amine and polyamine biosynthesis; betaine biosynthesis via choline pathway; betaine from betaine aldehyde: step 1/1. Multifunctional enzyme mediating important protective effects. Metabolizes betaine aldehyde to betaine, an important cellular osmolyte and methyl donor. Protects cells from oxidative stress by metabolizing a number of lipid peroxidation-derived aldehydes. Involved in lysine catabolism. This Bos taurus (Bovine) protein is Alpha-aminoadipic semialdehyde dehydrogenase (ALDH7A1).